A 190-amino-acid polypeptide reads, in one-letter code: Recombination protein RecR (190 aa).

Residues 58–73 form a C4-type zinc finger; the sequence is CGQCGALSENELCEIC. The Toprim domain occupies 81–167; it reads NILCIVESPK…TFSKIAQGIP (87 aa).

This sequence belongs to the RecR family.

Its function is as follows. May play a role in DNA repair. It seems to be involved in an RecBC-independent recombinational process of DNA repair. It may act with RecF and RecO. This is Recombination protein RecR from Campylobacter jejuni subsp. jejuni serotype O:6 (strain 81116 / NCTC 11828).